The sequence spans 360 residues: G-protein coupled receptor 15 (360 aa).

Residues 1-33 (MEPATALLIVDYYDYTSPDPPFLETPSHLSYTS) are Extracellular-facing. The chain crosses the membrane as a helical span at residues 34 to 54 (VFLPIFYTVVFLTGVVGNFIL). Residues 55 to 69 (MIALHFKRGNRRLID) are Cytoplasmic-facing. Residues 70 to 90 (IFIINLAASDFIFLVTVPLWM) traverse the membrane as a helical segment. The Extracellular segment spans residues 91–120 (DKEASLGLWRTGSFLCKGSSYVISVNMHCS). The helical transmembrane segment at 121–141 (VFLLTCMSMDRYLAIMHPALA) threads the bilayer. Topologically, residues 142–149 (KRLRRRSS) are cytoplasmic. The helical transmembrane segment at 150-170 (AYAVCAVVWIISCVLGLPTLL) threads the bilayer. Residues 171–192 (SRELTHIEGKPYCAEKKPTSLK) are Extracellular-facing. A helical membrane pass occupies residues 193–213 (LMWGLVALITTFFVPLLSIVT). Topologically, residues 214 to 239 (CYCCITRRLCAHYQQSGKHNKKLKKS) are cytoplasmic. Residues 240–260 (IKIVIIAVAAFTVSWVPFNTF) form a helical membrane-spanning segment. Over 261–284 (KLLAIVSGFQPEGLFHSEALQLAM) the chain is Extracellular. A helical membrane pass occupies residues 285–305 (NVTGPLAFASSCVNPLIYYVF). The Cytoplasmic portion of the chain corresponds to 306-360 (DSYIRRAIVRCLCPCLKTHNFGSSTETSDSHLTKALSNFIHAEDFIRRRKRSVSL). S359 carries the post-translational modification Phosphoserine.

This sequence belongs to the G-protein coupled receptor 1 family. In terms of assembly, interacts with adapter YWHAE; this interaction promotes ER-to-Golgi transport of GPR15. In terms of processing, phosphorylation is necessary for YWHAE binding and efficient surface expression. Post-translationally, O-glycosylated. Sialylated O-glycans in the N-terminal tail inhibits binding of GPR15LG. Sulfation is required for efficient binding of GPR15LG. In terms of tissue distribution, highly expressed in gut tissues and lymphoid organs, largely restricted to TCRbeta+ cells. Expressed in fetal thymic dendritic epidermal T-cell precursors.

It localises to the cell membrane. In terms of biological role, g protein-coupled receptor that plays an important role in immune homeostasis. Acts via its natural ligand GPR15LG, a chemokine-like polypeptide strongly expressed in gastrointestinal tissues. GPR15-GPR15LG signaling axis regulates intestinal homeostasis and inflammation through the migration of immune cells. Controls thereby the specific homing of T-cells, particularly FOXP3+ regulatory T-cells (Tregs), to the large intestine lamina propria. Also required for skin localization of thymus-derived dendritic epidermal T-cells. Plays an important role in mediating cytoprotective function as well as angiogenesis of thrombomodulin. Mechanistically, preferentially signals through the Gi/o pathway to inhibit adenylate cyclase activity and activate a phosphatidylinositol-calcium second messenger system that regulates the release of Ca(2+) ions from intracellular stores. The protein is G-protein coupled receptor 15 (Gpr15) of Mus musculus (Mouse).